Here is a 454-residue protein sequence, read N- to C-terminus: Protein disulfide-isomerase TMX3 (454 aa).

The first 24 residues, 1-24 (MAAWKSWAALRLCATVVLLDMVVC), serve as a signal peptide directing secretion. The region spanning 25–128 (KGFVEDLDES…KDDIIEFAHR (104 aa)) is the Thioredoxin domain. Topologically, residues 25–375 (KGFVEDLDES…TIVSIFKSSP (351 aa)) are lumenal. Active-site nucleophile residues include Cys-53 and Cys-56. A disulfide bond links Cys-53 and Cys-56. N-linked (GlcNAc...) asparagine glycosylation is found at Asn-258 and Asn-313. Residues 376–396 (LMGCFLFGLPLGVISIMCYGI) form a helical membrane-spanning segment. Residues 397-454 (YTADTDGGYIEERYEVSKSENENQEQIEESKEQQEPSSGGSVVPTVQEPKDVLEKKKD) lie on the Cytoplasmic side of the membrane. The disordered stretch occupies residues 412–454 (VSKSENENQEQIEESKEQQEPSSGGSVVPTVQEPKDVLEKKKD). The segment covering 444–454 (EPKDVLEKKKD) has biased composition (basic and acidic residues). A Di-lysine motif motif is present at residues 451-454 (KKKD).

Belongs to the protein disulfide isomerase family.

It localises to the endoplasmic reticulum membrane. It catalyses the reaction Catalyzes the rearrangement of -S-S- bonds in proteins.. In terms of biological role, probable disulfide isomerase, which participates in the folding of proteins containing disulfide bonds. May act as a dithiol oxidase. Acts as a regulator of endoplasmic reticulum-mitochondria contact sites via its ability to regulate redox signals. This Pongo abelii (Sumatran orangutan) protein is Protein disulfide-isomerase TMX3 (TMX3).